We begin with the raw amino-acid sequence, 753 residues long: Probable TonB-dependent siderophore receptor PiuA (753 aa).

An N-terminal signal peptide occupies residues 1-35 (MSRQSTDTAVSSQRLLASAIGVAITAIAAPQAAQA). The region spanning 79-185 (PLLDTPKTVT…TGGSLNLISK (107 aa)) is the TBDR plug domain. Residues 190–753 (DNFTDAGFTW…TALLGVNFHF (564 aa)) form the TBDR beta-barrel domain. Cys420 and Cys430 are oxidised to a cystine.

This sequence belongs to the TonB-dependent receptor family.

It is found in the cell outer membrane. Functionally, involved in the initial step of iron uptake by binding iron chelating siderophores, thereby allowing extraction of iron from the environment. Probably involved in the transport of siderophores, including host catecholamines such as dopamine. The chain is Probable TonB-dependent siderophore receptor PiuA from Pseudomonas aeruginosa (strain ATCC 15692 / DSM 22644 / CIP 104116 / JCM 14847 / LMG 12228 / 1C / PRS 101 / PAO1).